The primary structure comprises 38 residues: Photosystem II reaction center protein L (38 aa).

Residues 17–37 form a helical membrane-spanning segment; sequence SLYWGLLLIFVLAVLFSNYFF.

This sequence belongs to the PsbL family. PSII is composed of 1 copy each of membrane proteins PsbA, PsbB, PsbC, PsbD, PsbE, PsbF, PsbH, PsbI, PsbJ, PsbK, PsbL, PsbM, PsbT, PsbX, PsbY, PsbZ, Psb30/Ycf12, at least 3 peripheral proteins of the oxygen-evolving complex and a large number of cofactors. It forms dimeric complexes.

It localises to the plastid. Its subcellular location is the chloroplast thylakoid membrane. In terms of biological role, one of the components of the core complex of photosystem II (PSII). PSII is a light-driven water:plastoquinone oxidoreductase that uses light energy to abstract electrons from H(2)O, generating O(2) and a proton gradient subsequently used for ATP formation. It consists of a core antenna complex that captures photons, and an electron transfer chain that converts photonic excitation into a charge separation. This subunit is found at the monomer-monomer interface and is required for correct PSII assembly and/or dimerization. In Gnetum gnemon (Spanish joint-fir), this protein is Photosystem II reaction center protein L.